Here is a 376-residue protein sequence, read N- to C-terminus: Respiration factor 1 (376 aa).

Disordered regions lie at residues 1 to 23 (MKDL…DNRG), 88 to 107 (VNVT…NSTK), 258 to 279 (FKEK…TGSS), and 347 to 376 (GVNE…QHTN). Over residues 354–376 (NSSNLNNSNSGTPHNHNQNQHTN) the composition is skewed to low complexity.

The protein resides in the cytoplasm. It localises to the nucleus. It is found in the mitochondrion. Functionally, mitochondrial and nuclear transcriptional activator required for respiratory growth. This Saccharomyces cerevisiae (strain YJM789) (Baker's yeast) protein is Respiration factor 1 (RSF1).